The chain runs to 263 residues: P29 (263 aa).

Positions 30–39 (VPEGLRDISK) are enriched in basic and acidic residues. Residues 30-93 (VPEGLRDISK…PKQKQLAPPI (64 aa)) form a disordered region. The segment covering 52 to 64 (LSRASARPQQLQP) has biased composition (polar residues).

The chain is P29 (p29) from Citrus sinensis (Sweet orange).